A 424-amino-acid polypeptide reads, in one-letter code: Adenylosuccinate synthetase (424 aa).

GTP contacts are provided by residues 12 to 18 (GDEGKGK) and 40 to 42 (GHT). The active-site Proton acceptor is the Asp-13. Mg(2+) is bound by residues Asp-13 and Gly-40. IMP is bound by residues 13–16 (DEGK), 38–41 (NAGH), Thr-130, Arg-144, Asn-220, Thr-235, and Arg-299. His-41 (proton donor) is an active-site residue. A substrate-binding site is contributed by 295–301 (VTTGRRR). GTP-binding positions include Arg-301, 327-329 (KLD), and 412-414 (GTG).

The protein belongs to the adenylosuccinate synthetase family. Homodimer. Mg(2+) is required as a cofactor.

It is found in the cytoplasm. It carries out the reaction IMP + L-aspartate + GTP = N(6)-(1,2-dicarboxyethyl)-AMP + GDP + phosphate + 2 H(+). It participates in purine metabolism; AMP biosynthesis via de novo pathway; AMP from IMP: step 1/2. Its function is as follows. Plays an important role in the de novo pathway and in the salvage pathway of purine nucleotide biosynthesis. Catalyzes the first committed step in the biosynthesis of AMP from IMP. This is Adenylosuccinate synthetase from Aspergillus fumigatus (strain CBS 144.89 / FGSC A1163 / CEA10) (Neosartorya fumigata).